The chain runs to 74 residues: Anaphase-promoting complex subunit 13 (74 aa).

Residues 33-56 (LSELPEPEQDNGGTTESVKEQEMK) are disordered.

It belongs to the APC13 family. In terms of assembly, the mammalian APC/C is composed at least of 14 distinct subunits ANAPC1, ANAPC2, CDC27/APC3, ANAPC4, ANAPC5, CDC16/APC6, ANAPC7, CDC23/APC8, ANAPC10, ANAPC11, CDC26/APC12, ANAPC13, ANAPC15 and ANAPC16 that assemble into a complex of at least 19 chains with a combined molecular mass of around 1.2 MDa; APC/C interacts with FZR1 and FBXO5.

The protein resides in the nucleus. The protein operates within protein modification; protein ubiquitination. Functionally, component of the anaphase promoting complex/cyclosome (APC/C), a cell cycle-regulated E3 ubiquitin ligase that controls progression through mitosis and the G1 phase of the cell cycle. The APC/C complex acts by mediating ubiquitination and subsequent degradation of target proteins: it mainly mediates the formation of 'Lys-11'-linked polyubiquitin chains and, to a lower extent, the formation of 'Lys-48'- and 'Lys-63'-linked polyubiquitin chains. The APC/C complex catalyzes assembly of branched 'Lys-11'-/'Lys-48'-linked branched ubiquitin chains on target proteins. This is Anaphase-promoting complex subunit 13 (Anapc13) from Mus musculus (Mouse).